Reading from the N-terminus, the 874-residue chain is Coatomer subunit gamma-1 (874 aa).

The segment covering 1-11 (MLKKFDKKDEE) has biased composition (basic and acidic residues). Residues 1-21 (MLKKFDKKDEESGGGSNPFQH) are disordered. HEAT repeat units follow at residues 64–101 (TEATEAFFAMTKLFQSNDPTLRRMCYLTIKEMSCIAED), 283–320 (KELAPAVSVLQLFCSSPKAALRYAAVRTLNKVAMKHPS), 322–355 (VTACNLDLENLVTDANRSIATLAITTLLKTGSEG), and 356–392 (SIDRLMKQISSFMSEISDEFKVVVVQAISALCQKYPR). Position 594 is a phosphothreonine (Thr594). The interval 609–874 (RQEIFQEQLA…PVDIVLASVG (266 aa)) is interaction with ZNF289/ARFGAP2.

Belongs to the COPG family. In terms of assembly, oligomeric complex that consists of at least the alpha, beta, beta', gamma, delta, epsilon and zeta subunits. Interacts with ZNF289/ARFGAP2 through its C-terminal appendage domain. Interacts with EGFR upon EGF treatment; interaction is essential for regulation of EGF-dependent nuclear transport of EGFR by retrograde trafficking from the Golgi to the ER. The coatomer interacts with KDEL receptors; the interaction is important for retrograde trafficking of KDEL-bearing proteins from the Golgi to the endoplasmic reticulum. Interacts with COPB1. Interacts with TMED10 (via C-terminus). Interacts with TMED2, TMED3, TMED7 and TMED9.

The protein localises to the cytoplasm. It is found in the cytosol. Its subcellular location is the golgi apparatus membrane. The protein resides in the cytoplasmic vesicle. It localises to the COPI-coated vesicle membrane. In terms of biological role, the coatomer is a cytosolic protein complex that binds to dilysine motifs and reversibly associates with Golgi non-clathrin-coated vesicles, which further mediate biosynthetic protein transport from the ER, via the Golgi up to the trans Golgi network. Coatomer complex is required for budding from Golgi membranes, and is essential for the retrograde Golgi-to-ER transport of dilysine-tagged proteins. In mammals, the coatomer can only be recruited by membranes associated to ADP-ribosylation factors (ARFs), which are small GTP-binding proteins; the complex also influences the Golgi structural integrity, as well as the processing, activity, and endocytic recycling of LDL receptors. Required for limiting lipid storage in lipid droplets. Involved in lipid homeostasis by regulating the presence of perilipin family members PLIN2 and PLIN3 at the lipid droplet surface and promoting the association of adipocyte triglyceride lipase (PNPLA2) with the lipid droplet surface to mediate lipolysis. In Bos taurus (Bovine), this protein is Coatomer subunit gamma-1 (COPG1).